A 189-amino-acid chain; its full sequence is SAGA-associated factor 11 homolog (189 aa).

The segment at cysteine 94–cysteine 115 adopts an SGF11-type zinc-finger fold. The interval arginine 128 to phenylalanine 189 is disordered. Over residues serine 136–threonine 145 the composition is skewed to low complexity. The residue at position 165 (serine 165) is a Phosphoserine. Residues asparagine 175–phenylalanine 189 show a composition bias toward low complexity.

Belongs to the SGF11 family. Component of some SAGA transcription coactivator-HAT complexes, at least composed of Ada2b, not/nonstop, Pcaf/Gcn5, Sgf11 and Spt3. Within the SAGA complex, Sgf11, e(y)2, and not/nonstop form an additional subcomplex of SAGA called the DUB module (deubiquitination module). Interacts directly with not/nonstop. Interacts with the AMEX complex component xmas-2. Interacts with Cbp80; important for promoter recruitment of Sgf11 that is not associated with the DUB module.

The protein localises to the nucleus. The protein resides in the nucleoplasm. Its subcellular location is the cytoplasm. In terms of biological role, component of the transcription regulatory histone acetylation (HAT) complex SAGA, a multiprotein complex that activates transcription by remodeling chromatin and mediating histone acetylation and deubiquitination. Within the SAGA complex, participates in a subcomplex that specifically deubiquitinates histone H2B. The SAGA complex is recruited to specific gene promoters by activators, where it is required for transcription. Required for nuclear receptor-mediated transactivation. Binds independently on SAGA to promoters in an RNA-dependent manner. Binds to mRNA and is essential for total mRNA export from the nucleus. Required to counteract heterochromatin silencing. Controls the development of neuronal connectivity in visual system by being required for accurate axon targeting in the optic lobe. Required for expression of ecdysone-induced genes such as br/broad. The sequence is that of SAGA-associated factor 11 homolog from Drosophila virilis (Fruit fly).